The sequence spans 122 residues: Ribosomal protein eL22-like (122 aa).

3 positions are modified to phosphoserine: Ser-112, Ser-118, and Ser-120.

Belongs to the eukaryotic ribosomal protein eL22 family.

The polypeptide is Ribosomal protein eL22-like (RPL22L1) (Homo sapiens (Human)).